The sequence spans 127 residues: MSLIPHDLGRQGEDAAASWLLCKGYRIIRRNYRYRRNEIDIIAMDDRTLCFVEVKTRATIDKGHPLEAVTPQKQKEIIRTARAFLCMEYHEEIDCRFDVVAIIAKGYEKGRLKEFDVEHITDAFWAE.

The protein belongs to the UPF0102 family.

In Prosthecochloris aestuarii (strain DSM 271 / SK 413), this protein is UPF0102 protein Paes_0016.